Consider the following 296-residue polypeptide: Phosphatidylglycerol--prolipoprotein diacylglyceryl transferase (296 aa).

The next 7 helical transmembrane spans lie at 17–37 (LAVR…IVVG), 59–79 (MMFY…VLFY), 97–117 (GGMS…LFAW), 129–149 (FVAP…FING), 204–224 (SQLY…FLFA), 230–250 (MGAI…TVEF), and 257–277 (FLGL…PMIL). A 1,2-diacyl-sn-glycero-3-phospho-(1'-sn-glycerol) is bound at residue Arg-142.

This sequence belongs to the Lgt family.

Its subcellular location is the cell inner membrane. The enzyme catalyses L-cysteinyl-[prolipoprotein] + a 1,2-diacyl-sn-glycero-3-phospho-(1'-sn-glycerol) = an S-1,2-diacyl-sn-glyceryl-L-cysteinyl-[prolipoprotein] + sn-glycerol 1-phosphate + H(+). It functions in the pathway protein modification; lipoprotein biosynthesis (diacylglyceryl transfer). Functionally, catalyzes the transfer of the diacylglyceryl group from phosphatidylglycerol to the sulfhydryl group of the N-terminal cysteine of a prolipoprotein, the first step in the formation of mature lipoproteins. This chain is Phosphatidylglycerol--prolipoprotein diacylglyceryl transferase, found in Burkholderia cenocepacia (strain HI2424).